Reading from the N-terminus, the 355-residue chain is MIKMRKLTREIKIGNKKIGGNNPILVQSMTNTDTHDVEKTVEQIKRLEEEGCDIIRVAVPDEKAAYSIKEIKKHINIPLVADIHFDYRLAIKSIENGADKIRINPGNIGREENIKKVVEAAKERGIPIRIGVNAGSLEKEILNKYGGITPEAVVESALKSVRLLEKLGFYDIVISLKTSNVPLTIEAYKLASSKVDYPLHLGITEAGTLESGTIKSAIGIGTLLYMGIGDTIRVSLTGDPVHEVRVGRQILRALGLLKEGVEVISCPTCGRTKIDVIKLATEVERRTSHIKKPLKVAVMGCVVNGPGEAKEADIGIAGGDREGVIFKKGKIYKIVKEEHLLEELLKEIEKMVKEE.

[4Fe-4S] cluster contacts are provided by C266, C269, C301, and E308.

This sequence belongs to the IspG family. [4Fe-4S] cluster is required as a cofactor.

The enzyme catalyses (2E)-4-hydroxy-3-methylbut-2-enyl diphosphate + oxidized [flavodoxin] + H2O + 2 H(+) = 2-C-methyl-D-erythritol 2,4-cyclic diphosphate + reduced [flavodoxin]. Its pathway is isoprenoid biosynthesis; isopentenyl diphosphate biosynthesis via DXP pathway; isopentenyl diphosphate from 1-deoxy-D-xylulose 5-phosphate: step 5/6. Functionally, converts 2C-methyl-D-erythritol 2,4-cyclodiphosphate (ME-2,4cPP) into 1-hydroxy-2-methyl-2-(E)-butenyl 4-diphosphate. This Caldanaerobacter subterraneus subsp. tengcongensis (strain DSM 15242 / JCM 11007 / NBRC 100824 / MB4) (Thermoanaerobacter tengcongensis) protein is 4-hydroxy-3-methylbut-2-en-1-yl diphosphate synthase (flavodoxin).